Here is a 152-residue protein sequence, read N- to C-terminus: Deoxyuridine 5'-triphosphate nucleotidohydrolase (152 aa).

Substrate contacts are provided by residues 70 to 72, asparagine 83, 87 to 89, and methionine 97; these read RSG and LID.

The protein belongs to the dUTPase family. Mg(2+) is required as a cofactor.

The catalysed reaction is dUTP + H2O = dUMP + diphosphate + H(+). The protein operates within pyrimidine metabolism; dUMP biosynthesis; dUMP from dCTP (dUTP route): step 2/2. In terms of biological role, this enzyme is involved in nucleotide metabolism: it produces dUMP, the immediate precursor of thymidine nucleotides and it decreases the intracellular concentration of dUTP so that uracil cannot be incorporated into DNA. In Buchnera aphidicola subsp. Baizongia pistaciae (strain Bp), this protein is Deoxyuridine 5'-triphosphate nucleotidohydrolase.